The sequence spans 540 residues: Phosphoenolpyruvate carboxykinase (ATP) (540 aa).

A substrate-binding site is contributed by arginine 65. N6-acetyllysine is present on lysine 87. The substrate site is built by tyrosine 207 and lysine 213. ATP-binding positions include lysine 213, histidine 232, and glycine 248–threonine 256. Lysine 213 and histidine 232 together coordinate Mn(2+). Aspartate 269 is a Mn(2+) binding site. ATP contacts are provided by residues glutamate 297, arginine 333, arginine 449–isoleucine 450, and threonine 455. Position 333 (arginine 333) interacts with substrate. Lysine 523 is modified (N6-acetyllysine).

It belongs to the phosphoenolpyruvate carboxykinase (ATP) family. In terms of assembly, monomer. Mn(2+) is required as a cofactor.

It localises to the cytoplasm. It catalyses the reaction oxaloacetate + ATP = phosphoenolpyruvate + ADP + CO2. It functions in the pathway carbohydrate biosynthesis; gluconeogenesis. Involved in the gluconeogenesis. Catalyzes the conversion of oxaloacetate (OAA) to phosphoenolpyruvate (PEP) through direct phosphoryl transfer between the nucleoside triphosphate and OAA. The sequence is that of Phosphoenolpyruvate carboxykinase (ATP) from Escherichia fergusonii (strain ATCC 35469 / DSM 13698 / CCUG 18766 / IAM 14443 / JCM 21226 / LMG 7866 / NBRC 102419 / NCTC 12128 / CDC 0568-73).